The sequence spans 63 residues: Protein BP4A (63 aa).

As to expression, pollen specific.

The protein is Protein BP4A (BP4A) of Brassica napus (Rape).